The following is a 222-amino-acid chain: MIF4G domain-containing protein (222 aa).

In terms of domain architecture, MIF4G spans 3–205 (EPSKEEYKIQ…LEIIEFRAAG (203 aa)).

This sequence belongs to the MIF4GD family. Interacts with EIF4G1, EIF4G2 and SLBP; probably tethered by SLBP to the 3'-end of mRNAs ending with the histone stem-loop, it also interacts with EIF4G1 which is bound to their 5'-end.

It localises to the cytoplasm. The protein resides in the nucleus. Functionally, functions in replication-dependent translation of histone mRNAs which differ from other eukaryotic mRNAs in that they do not end with a poly-A tail but a stem-loop. May participate in circularizing those mRNAs specifically enhancing their translation. This chain is MIF4G domain-containing protein (MIF4GD), found in Bos taurus (Bovine).